We begin with the raw amino-acid sequence, 182 residues long: Large ribosomal subunit protein uL22 (182 aa).

The tract at residues 159–182 is disordered; sequence AAAKPKATAKKATGEKSKAKTKAN.

This sequence belongs to the universal ribosomal protein uL22 family. Part of the 50S ribosomal subunit.

This protein binds specifically to 23S rRNA; its binding is stimulated by other ribosomal proteins, e.g. L4, L17, and L20. It is important during the early stages of 50S assembly. It makes multiple contacts with different domains of the 23S rRNA in the assembled 50S subunit and ribosome. Its function is as follows. The globular domain of the protein is located near the polypeptide exit tunnel on the outside of the subunit, while an extended beta-hairpin is found that lines the wall of the exit tunnel in the center of the 70S ribosome. The chain is Large ribosomal subunit protein uL22 from Cytophaga hutchinsonii (strain ATCC 33406 / DSM 1761 / CIP 103989 / NBRC 15051 / NCIMB 9469 / D465).